Here is a 208-residue protein sequence, read N- to C-terminus: Large ribosomal subunit protein uL4 (208 aa).

A disordered region spans residues 44–79 (QRQGTHKSKERSEISGSTRKIGRQKGGGGARRGDMN).

Belongs to the universal ribosomal protein uL4 family. As to quaternary structure, part of the 50S ribosomal subunit.

In terms of biological role, one of the primary rRNA binding proteins, this protein initially binds near the 5'-end of the 23S rRNA. It is important during the early stages of 50S assembly. It makes multiple contacts with different domains of the 23S rRNA in the assembled 50S subunit and ribosome. Its function is as follows. Forms part of the polypeptide exit tunnel. The polypeptide is Large ribosomal subunit protein uL4 (Bacteroides fragilis (strain YCH46)).